Consider the following 434-residue polypeptide: E3 ubiquitin-protein transferase MAEA (434 aa).

The interval 1 to 124 (MAVQESAAQL…AAASVWKRKR (124 aa)) is extracellular and involved in cell to cell contact. T28 carries the post-translational modification Phosphothreonine. In terms of domain architecture, LisH spans 121–153 (KRKRMDRMMVEHLLRCGYYNTAVKLARQSGIED). The region spanning 159 to 254 (MFLTAKEVEE…ELIRQNKRLD (96 aa)) is the CTLH domain. The tract at residues 190–222 (RKMKGRQSEHDAKTGRKSRVASGSPKESEDLGM) is disordered. The RING-Gid-type zinc-finger motif lies at 352–419 (CPVCSRSLNK…QDDKVVCPRT (68 aa)).

Identified in the CTLH complex that contains GID4, RANBP9 and/or RANBP10, MKLN1, MAEA, RMND5A (or alternatively its paralog RMND5B), GID8, ARMC8, WDR26 and YPEL5. Within this complex, MAEA, RMND5A (or alternatively its paralog RMND5B), GID8, WDR26, and RANBP9 and/or RANBP10 form the catalytic core, while GID4, MKLN1, ARMC8 and YPEL5 have ancillary roles. Interacts with F-actin. Post-translationally, autoubiquitinated as component of the CTLH E3 ubiquitin-protein ligase complex (in vitro).

It is found in the cytoplasm. The protein resides in the nucleus. The protein localises to the nucleoplasm. It localises to the nucleus matrix. Its subcellular location is the cell membrane. It is found in the cytoskeleton. The enzyme catalyses S-ubiquitinyl-[E2 ubiquitin-conjugating enzyme]-L-cysteine + [acceptor protein]-L-lysine = [E2 ubiquitin-conjugating enzyme]-L-cysteine + N(6)-ubiquitinyl-[acceptor protein]-L-lysine.. Core component of the CTLH E3 ubiquitin-protein ligase complex that selectively accepts ubiquitin from UBE2H and mediates ubiquitination and subsequent proteasomal degradation of the transcription factor HBP1. MAEA and RMND5A are both required for catalytic activity of the CTLH E3 ubiquitin-protein ligase complex. MAEA is required for normal cell proliferation. The CTLH E3 ubiquitin-protein ligase complex is not required for the degradation of enzymes involved in gluconeogenesis, such as FBP1. Plays a role in erythroblast enucleation during erythrocyte maturation and in the development of mature macrophages. Mediates the attachment of erythroid cell to mature macrophages; this MAEA-mediated contact inhibits erythroid cell apoptosis. Participates in erythroblastic island formation, which is the functional unit of definitive erythropoiesis. Associates with F-actin to regulate actin distribution in erythroblasts and macrophages. May contribute to nuclear architecture and cells division events. The sequence is that of E3 ubiquitin-protein transferase MAEA (MAEA) from Bos taurus (Bovine).